We begin with the raw amino-acid sequence, 62 residues long: Large ribosomal subunit protein uL29 (62 aa).

This sequence belongs to the universal ribosomal protein uL29 family.

The protein is Large ribosomal subunit protein uL29 of Vesicomyosocius okutanii subsp. Calyptogena okutanii (strain HA).